The following is a 191-amino-acid chain: MTEVQQTEKVTPRLKTKYREEIRGRLQEQFQYGNVMQVPGLVKVVVNMGVGEAAKDSKIIDDAVTDLTAITGQKPMITKARKSIAQFKLREGMPIGTHATLRGDRMWEFLDRLVTLPLPRIRDFRGLSDRQFDGNGNYTFGLSEQTVFHEIDQDKIDRVRGMDITVVTTAKNDDEGRALLKALGFPFKTDQ.

This sequence belongs to the universal ribosomal protein uL5 family. As to quaternary structure, part of the 50S ribosomal subunit; part of the 5S rRNA/L5/L18/L25 subcomplex. Contacts the 5S rRNA and the P site tRNA. Forms a bridge to the 30S subunit in the 70S ribosome.

This is one of the proteins that bind and probably mediate the attachment of the 5S RNA into the large ribosomal subunit, where it forms part of the central protuberance. In the 70S ribosome it contacts protein S13 of the 30S subunit (bridge B1b), connecting the 2 subunits; this bridge is implicated in subunit movement. Contacts the P site tRNA; the 5S rRNA and some of its associated proteins might help stabilize positioning of ribosome-bound tRNAs. This chain is Large ribosomal subunit protein uL5, found in Micrococcus luteus (Micrococcus lysodeikticus).